A 101-amino-acid chain; its full sequence is NADH-quinone oxidoreductase subunit K (101 aa).

Transmembrane regions (helical) follow at residues 2 to 22 (TLSAYLALALILFCIGLYGAL), 28 to 48 (VIVLICIELMLNAVNINFVAF), and 62 to 82 (FALFAIAVAAAEAAVGLAALI).

It belongs to the complex I subunit 4L family. NDH-1 is composed of 14 different subunits. Subunits NuoA, H, J, K, L, M, N constitute the membrane sector of the complex.

The protein localises to the cell membrane. It catalyses the reaction a quinone + NADH + 5 H(+)(in) = a quinol + NAD(+) + 4 H(+)(out). NDH-1 shuttles electrons from NADH, via FMN and iron-sulfur (Fe-S) centers, to quinones in the respiratory chain. The immediate electron acceptor for the enzyme in this species is believed to be a menaquinone. Couples the redox reaction to proton translocation (for every two electrons transferred, four hydrogen ions are translocated across the cytoplasmic membrane), and thus conserves the redox energy in a proton gradient. This Geobacillus kaustophilus (strain HTA426) protein is NADH-quinone oxidoreductase subunit K.